We begin with the raw amino-acid sequence, 509 residues long: Protein WHAT'S THIS FACTOR 1 homolog, chloroplastic (509 aa).

The transit peptide at 1–56 (MDAKLLLLPFPSPPATLHHHPPPPKSLFLGASLPLLHPPPPLRLLRPGAPRRLAVV) directs the protein to the chloroplast. The region spanning 65–393 (KEIPFDNVIQ…LKEKMRALVA (329 aa)) is the PORR domain. Disordered regions lie at residues 402–431 (VPAT…DEDE) and 444–509 (SGGK…RERW). Residues 461-474 (ENDDSPPDFEDDDG) show a composition bias toward acidic residues.

It is found in the plastid. The protein resides in the chloroplast. Its function is as follows. RNA-binding protein involved in group II intron splicing. Binds specific group II introns and promotes their splicing. Functions in the context of a heterodimer with the ribonuclease III domain-containing protein RNC1. This Oryza sativa subsp. japonica (Rice) protein is Protein WHAT'S THIS FACTOR 1 homolog, chloroplastic.